We begin with the raw amino-acid sequence, 333 residues long: Adenosine deaminase (333 aa).

2 residues coordinate Zn(2+): His12 and His14. The substrate site is built by His14, Asp16, and Gly170. His197 provides a ligand contact to Zn(2+). Glu200 (proton donor) is an active-site residue. Asp278 is a Zn(2+) binding site. A substrate-binding site is contributed by Asp279.

The protein belongs to the metallo-dependent hydrolases superfamily. Adenosine and AMP deaminases family. Adenosine deaminase subfamily. Zn(2+) serves as cofactor.

The catalysed reaction is adenosine + H2O + H(+) = inosine + NH4(+). It catalyses the reaction 2'-deoxyadenosine + H2O + H(+) = 2'-deoxyinosine + NH4(+). Functionally, catalyzes the hydrolytic deamination of adenosine and 2-deoxyadenosine. This is Adenosine deaminase from Shigella boydii serotype 4 (strain Sb227).